The sequence spans 103 residues: Putative membrane protein insertion efficiency factor (103 aa).

Belongs to the UPF0161 family.

It localises to the cell membrane. In terms of biological role, could be involved in insertion of integral membrane proteins into the membrane. This chain is Putative membrane protein insertion efficiency factor, found in Clavibacter michiganensis subsp. michiganensis (strain NCPPB 382).